Reading from the N-terminus, the 541-residue chain is Protein yellow (541 aa).

An N-terminal signal peptide occupies residues 1 to 21 (MFQDKGWILVTLITLVTPSWA). 2 N-linked (GlcNAc...) asparagine glycosylation sites follow: Asn144 and Asn215. The interval 443-463 (QKPQTSWASSPPPPSRTYLPA) is disordered.

This sequence belongs to the major royal jelly protein family.

It localises to the secreted. Functionally, controls the pigmentation pattern of the adult cuticle and larval mouth parts. This chain is Protein yellow (y), found in Drosophila mauritiana (Fruit fly).